Here is a 133-residue protein sequence, read N- to C-terminus: MTDEQIYAFCDANKDDIRCKCIYPDKSIVRIGIDTRLPYYCWYEPCKRSDALLPASLKKNISRCNVSDCTISLGNVSITDSKLDVNNVCDSKRVATENIAVRYLNQEIRYPIIDIKWLPIGLLALAILILAFF.

Topologically, residues 1 to 111 (MTDEQIYAFC…RYLNQEIRYP (111 aa)) are virion surface. A helical; Signal-anchor membrane pass occupies residues 112–132 (IIDIKWLPIGLLALAILILAF).

The protein belongs to the orthopoxvirus OPG104 family. Part of a stable entry-fusion complex (EFC) which is at least composed of proteins OPG143, OPG147, OPG155, OPG086, OPG094, OPG107, OPG104, and OPG099. Formation of the viral membrane is necessary for the assembly of the complex.

Its subcellular location is the virion membrane. Its function is as follows. Envelope protein part of the entry-fusion complex responsible for the virus membrane fusion with host cell membrane during virus entry. Also plays a role in cell-cell fusion (syncytium formation). The protein is Protein OPG104 (OPG104) of Variola virus (isolate Human/India/Ind3/1967) (VARV).